Consider the following 199-residue polypeptide: NAD(P)H dehydrogenase (quinone) (199 aa).

A Flavodoxin-like domain is found at V4 to I190. FMN-binding positions include S10–I15 and T78–F80. Y12 is an NAD(+) binding site. W98 serves as a coordination point for substrate. Residues S113–G119 and H134 contribute to the FMN site.

This sequence belongs to the WrbA family. FMN serves as cofactor.

The catalysed reaction is a quinone + NADH + H(+) = a quinol + NAD(+). It carries out the reaction a quinone + NADPH + H(+) = a quinol + NADP(+). The chain is NAD(P)H dehydrogenase (quinone) from Rhodopseudomonas palustris (strain HaA2).